A 424-amino-acid chain; its full sequence is Histidine--tRNA ligase (424 aa).

Belongs to the class-II aminoacyl-tRNA synthetase family. In terms of assembly, homodimer.

The protein resides in the cytoplasm. The catalysed reaction is tRNA(His) + L-histidine + ATP = L-histidyl-tRNA(His) + AMP + diphosphate + H(+). This chain is Histidine--tRNA ligase, found in Salmonella typhi.